A 926-amino-acid polypeptide reads, in one-letter code: Serine/threonine-protein kinase pakE (926 aa).

The segment covering 36–55 (SSRELPTQDSSTKTSNITTP) has biased composition (polar residues). Disordered regions lie at residues 36–257 (SSRE…RPKL) and 546–576 (QLNNNNNNNNNNNNNNNNNNNNNNNNITTTT). A compositionally biased stretch (low complexity) spans 56 to 107 (NNNNNNNNNNNNNNNNNNNNNNNNNNNNNNNNNNNNNNNNNNNNNNNNNNNN). The span at 108-117 (TPTSLNSSWK) shows a compositional bias: polar residues. Over residues 134 to 173 (NNNNNVGSPNNQSTSQTNHQQPPPQQLQQQQSLSSTSTPS) the composition is skewed to low complexity. Over residues 183–204 (RRNVTSPNLTRSDPTVPITNSR) the composition is skewed to polar residues. Residues 215 to 253 (PQFQLNNLNFDDNNDHSTTTTNNNNNNNNNNSNNNNNNN) show a composition bias toward low complexity. The stretch at 534–567 (LDFEKELKENQQQLNNNNNNNNNNNNNNNNNNNN) forms a coiled coil. The region spanning 650-903 (FEFKEKLGQG…VIDLLSHDFI (254 aa)) is the Protein kinase domain. ATP is bound by residues 656–664 (LGQGGYGAV) and lysine 679. The Proton acceptor role is filled by aspartate 771.

Belongs to the protein kinase superfamily. STE Ser/Thr protein kinase family. STE20 subfamily. Requires Mg(2+) as cofactor.

It catalyses the reaction L-seryl-[protein] + ATP = O-phospho-L-seryl-[protein] + ADP + H(+). The catalysed reaction is L-threonyl-[protein] + ATP = O-phospho-L-threonyl-[protein] + ADP + H(+). Functionally, may play a role in responding to changes in chemoattractant levels. In Dictyostelium discoideum (Social amoeba), this protein is Serine/threonine-protein kinase pakE.